We begin with the raw amino-acid sequence, 211 residues long: Small ribosomal subunit protein uS3 (211 aa).

A KH type-2 domain is found at 38 to 106 (LRSFVKKTFH…DVELHIVEVK (69 aa)).

Belongs to the universal ribosomal protein uS3 family. Part of the 30S ribosomal subunit. Forms a tight complex with proteins S10 and S14.

Binds the lower part of the 30S subunit head. Binds mRNA in the 70S ribosome, positioning it for translation. This chain is Small ribosomal subunit protein uS3, found in Anaplasma marginale (strain Florida).